A 345-amino-acid chain; its full sequence is Quinolinate synthase (345 aa).

Iminosuccinate-binding residues include histidine 69 and serine 87. Cysteine 132 is a binding site for [4Fe-4S] cluster. Iminosuccinate-binding positions include 158–160 (YVN) and serine 175. Cysteine 217 contributes to the [4Fe-4S] cluster binding site. Residues 243–245 (HPE) and threonine 260 each bind iminosuccinate. Position 303 (cysteine 303) interacts with [4Fe-4S] cluster.

The protein belongs to the quinolinate synthase family. Type 2 subfamily. [4Fe-4S] cluster is required as a cofactor.

It is found in the cytoplasm. The enzyme catalyses iminosuccinate + dihydroxyacetone phosphate = quinolinate + phosphate + 2 H2O + H(+). The protein operates within cofactor biosynthesis; NAD(+) biosynthesis; quinolinate from iminoaspartate: step 1/1. Its function is as follows. Catalyzes the condensation of iminoaspartate with dihydroxyacetone phosphate to form quinolinate. This Agrobacterium fabrum (strain C58 / ATCC 33970) (Agrobacterium tumefaciens (strain C58)) protein is Quinolinate synthase.